Here is a 645-residue protein sequence, read N- to C-terminus: Sodium-dependent nutrient amino acid transporter 1 (645 aa).

Residues 1-48 (MELKTMPHNGANGSPQHNNNNNSNNNNNVSSDTKTDNNEKEAQKKDEG) are disordered. Topologically, residues 1 to 51 (MELKTMPHNGANGSPQHNNNNNSNNNNNVSSDTKTDNNEKEAQKKDEGRTN) are cytoplasmic. Residues 18–32 (NNNNNSNNNNNVSSD) show a composition bias toward low complexity. Residues 33 to 48 (TKTDNNEKEAQKKDEG) show a composition bias toward basic and acidic residues. The next 3 membrane-spanning stretches (helical) occupy residues 52-72 (WSNG…LGNV), 85-105 (GAFL…MYYL), and 138-158 (TICI…YLFV). 2 N-linked (GlcNAc...) asparagine glycosylation sites follow: N191 and N205. 7 helical membrane passes run 234–254 (IPDW…FLVI), 264–284 (AAYF…GRAV), 313–333 (AVVQ…MFAS), 347–367 (IVTT…FAIL), 407–427 (LFSV…IVAL), 454–474 (CGFL…LTLV), and 480–500 (TYVV…IYGL). Residue N514 is glycosylated (N-linked (GlcNAc...) asparagine). Helical transmembrane passes span 522–542 (CWSF…MATI) and 559–579 (AGWL…WWYI).

This sequence belongs to the sodium:neurotransmitter symporter (SNF) (TC 2.A.22) family.

The protein resides in the membrane. In terms of biological role, unusual broad substrate spectrum amino acid:sodium cotransporter that promotes absorption of the D isomers of essential amino acids. Neutral amino acids are the preferred substrates, especially methionine and phenylalanine. The chain is Sodium-dependent nutrient amino acid transporter 1 from Drosophila mojavensis (Fruit fly).